A 344-amino-acid polypeptide reads, in one-letter code: Dihydroorotate dehydrogenase (quinone) (344 aa).

Residues 65–69 (AGLDK) and Thr89 contribute to the FMN site. Lys69 is a substrate binding site. Residue 114–118 (NRMGF) participates in substrate binding. Residues Asn145 and Asn178 each contribute to the FMN site. A substrate-binding site is contributed by Asn178. The Nucleophile role is filled by Ser181. Asn183 serves as a coordination point for substrate. FMN contacts are provided by Lys223 and Thr251. 252-253 (NT) contacts substrate. FMN is bound by residues Gly274, Gly303, and 324-325 (YS).

This sequence belongs to the dihydroorotate dehydrogenase family. Type 2 subfamily. In terms of assembly, monomer. FMN is required as a cofactor.

It is found in the cell membrane. The enzyme catalyses (S)-dihydroorotate + a quinone = orotate + a quinol. The protein operates within pyrimidine metabolism; UMP biosynthesis via de novo pathway; orotate from (S)-dihydroorotate (quinone route): step 1/1. Catalyzes the conversion of dihydroorotate to orotate with quinone as electron acceptor. The sequence is that of Dihydroorotate dehydrogenase (quinone) from Cupriavidus pinatubonensis (strain JMP 134 / LMG 1197) (Cupriavidus necator (strain JMP 134)).